The sequence spans 142 residues: Large ribosomal subunit protein uL13 (142 aa).

Belongs to the universal ribosomal protein uL13 family. As to quaternary structure, part of the 50S ribosomal subunit.

In terms of biological role, this protein is one of the early assembly proteins of the 50S ribosomal subunit, although it is not seen to bind rRNA by itself. It is important during the early stages of 50S assembly. The protein is Large ribosomal subunit protein uL13 of Erwinia tasmaniensis (strain DSM 17950 / CFBP 7177 / CIP 109463 / NCPPB 4357 / Et1/99).